The primary structure comprises 152 residues: UPF0266 membrane protein KPN78578_23010 (152 aa).

The next 3 helical transmembrane spans lie at 6-26 (LVII…QFIM), 45-65 (VDGM…ITQH), and 67-87 (TAIT…LFWI).

The protein belongs to the UPF0266 family.

It localises to the cell inner membrane. The protein is UPF0266 membrane protein KPN78578_23010 of Klebsiella pneumoniae subsp. pneumoniae (strain ATCC 700721 / MGH 78578).